The sequence spans 355 residues: MLLLQIILLLLPVICSAGDRKPRHYEINLDEPPSQRWNQVIKDHLEYLPGVVEETKKYIPKPLQPFVWWAASKIDRYFTTEIQEELKGIASESGLPIGEIVGMNILYDVAAFDRRHIFGLGCTSIVAQNSAGQIIHGRNLDYDMTELLKNITIHVDFVRNGTIQYSGLTFALYNGVLTGQRPGEYSVSLNARYSGAYIDNILMEFYTKFKRPVSFFIRDVLENQATYTEAVDAFSRTHLFSPSYIIVAGIKKNEGVVISRNRWSAANVYPLNVDANQWFLVETNFDNWKKQGDDRRITAIQKLKELGRRNFDEKSMVEVLSTVPVRNNLTVFSTVMVPGLPDSADYFRQSTWILP.

The first 17 residues, Met1–Ala17, serve as a signal peptide directing secretion. The active-site Nucleophile is Cys122. Residues Asn150, Asn160, and Asn328 are each glycosylated (N-linked (GlcNAc...) asparagine).

It belongs to the acid ceramidase family. As to quaternary structure, heterodimer of an alpha and a beta subunit, produced by autocatalytic cleavage. In terms of processing, N-glycosylated. Autoproteolytic cleavage at pH 4.5 gives rise to the alpha and beta subunit. Cleavage gives rise to a conformation change that activates the enzyme. The same catalytic Cys residue mediates the autoproteolytic cleavage and subsequent hydrolysis of lipid substrates.

The protein resides in the lysosome. The protein localises to the membrane. It carries out the reaction N-hexadecanoylethanolamine + H2O = ethanolamine + hexadecanoate. It catalyses the reaction an N-(long-chain fatty acyl)ethanolamine + H2O = a long-chain fatty acid + ethanolamine. The protein operates within lipid metabolism; fatty acid metabolism. In terms of biological role, degrades bioactive fatty acid amides, such as N-palmitoylethanolamine, to ethanolamine and free fatty acids. The chain is N-acylethanolamine-hydrolyzing acid amidase from Caenorhabditis elegans.